Here is a 234-residue protein sequence, read N- to C-terminus: Proteasome subunit alpha (234 aa).

The protein belongs to the peptidase T1A family. In terms of assembly, the 20S proteasome core is composed of 14 alpha and 14 beta subunits that assemble into four stacked heptameric rings, resulting in a barrel-shaped structure. The two inner rings, each composed of seven catalytic beta subunits, are sandwiched by two outer rings, each composed of seven alpha subunits. The catalytic chamber with the active sites is on the inside of the barrel. Has a gated structure, the ends of the cylinder being occluded by the N-termini of the alpha-subunits. Is capped by the proteasome-associated ATPase, ARC.

It localises to the cytoplasm. The protein operates within protein degradation; proteasomal Pup-dependent pathway. With respect to regulation, the formation of the proteasomal ATPase ARC-20S proteasome complex, likely via the docking of the C-termini of ARC into the intersubunit pockets in the alpha-rings, may trigger opening of the gate for substrate entry. Interconversion between the open-gate and close-gate conformations leads to a dynamic regulation of the 20S proteasome proteolysis activity. Its function is as follows. Component of the proteasome core, a large protease complex with broad specificity involved in protein degradation. The protein is Proteasome subunit alpha of Acidothermus cellulolyticus (strain ATCC 43068 / DSM 8971 / 11B).